A 95-amino-acid polypeptide reads, in one-letter code: Signal recognition particle 19 kDa protein (95 aa).

Belongs to the SRP19 family. Part of the signal recognition particle protein translocation system, which is composed of SRP and FtsY. Archaeal SRP consists of a 7S RNA molecule of 300 nucleotides and two protein subunits: SRP54 and SRP19.

The protein localises to the cytoplasm. Functionally, involved in targeting and insertion of nascent membrane proteins into the cytoplasmic membrane. Binds directly to 7S RNA and mediates binding of the 54 kDa subunit of the SRP. The sequence is that of Signal recognition particle 19 kDa protein from Pyrobaculum islandicum (strain DSM 4184 / JCM 9189 / GEO3).